Here is a 1323-residue protein sequence, read N- to C-terminus: Tetratricopeptide repeat protein 21 homolog (1323 aa).

TPR repeat units follow at residues 56-89 (VPLA…QNFS), 411-444 (ESPF…LIEM), 580-613 (SLYH…PKKE), 667-700 (HQLV…QSNF), 702-735 (LSRI…EPTP), 736-768 (GSYS…QSKD), 770-802 (QLAE…YKDK), 804-835 (MRLK…EPEP), 845-878 (IQFL…HNKI), 892-925 (ARIC…YETD), 927-959 (KSNL…DPHN), 961-993 (EANL…NPLH), 995-1027 (HALF…NPRC), 1031-1064 (AGYS…PNVV), 1203-1236 (EKCW…NCNS), 1238-1270 (RAFE…TNQK), and 1272-1305 (CSFG…NPQY).

The protein belongs to the TTC21 family.

The chain is Tetratricopeptide repeat protein 21 homolog from Caenorhabditis briggsae.